The following is a 310-amino-acid chain: Phosphoribosylaminoimidazole-succinocarboxamide synthase (310 aa).

Belongs to the SAICAR synthetase family.

It carries out the reaction 5-amino-1-(5-phospho-D-ribosyl)imidazole-4-carboxylate + L-aspartate + ATP = (2S)-2-[5-amino-1-(5-phospho-beta-D-ribosyl)imidazole-4-carboxamido]succinate + ADP + phosphate + 2 H(+). It functions in the pathway purine metabolism; IMP biosynthesis via de novo pathway; 5-amino-1-(5-phospho-D-ribosyl)imidazole-4-carboxamide from 5-amino-1-(5-phospho-D-ribosyl)imidazole-4-carboxylate: step 1/2. In Xanthomonas oryzae pv. oryzae (strain MAFF 311018), this protein is Phosphoribosylaminoimidazole-succinocarboxamide synthase.